We begin with the raw amino-acid sequence, 492 residues long: Cytoplasmic dynein 1 light intermediate chain 2 (492 aa).

61 to 68 (GEDGSGKT) contributes to the ATP binding site. Disordered regions lie at residues 187–206 (PEEG…SGSD), 371–423 (AKQP…KNNA), and 437–492 (LSKK…ENEA). A Phosphoserine modification is found at Ser-194. Over residues 371-381 (AKQPATPTRAS) the composition is skewed to polar residues. Phosphoserine occurs at positions 383 and 391. Position 397 is an omega-N-methylarginine (Arg-397). Over residues 400–412 (PASVPSSSPGTSV) the composition is skewed to low complexity. Thr-441 is modified (phosphothreonine). Phosphoserine occurs at positions 443 and 446. A compositionally biased stretch (polar residues) spans 452–469 (VQSTAKKSGQKTVLSNVQ). Residues 471 to 480 (ELDRMTRKPD) are compositionally biased toward basic and acidic residues. Residues 482 to 492 (MVTNSSTENEA) show a composition bias toward polar residues.

It belongs to the dynein light intermediate chain family. In terms of assembly, homodimer. The cytoplasmic dynein 1 complex consists of two catalytic heavy chains (HCs) and a number of non-catalytic subunits presented by intermediate chains (ICs), light intermediate chains (LICs) and light chains (LCs); the composition seems to vary in respect to the IC, LIC and LC composition. The heavy chain homodimer serves as a scaffold for the probable homodimeric assembly of the respective non-catalytic subunits. The ICs and LICs bind directly to the HC dimer and the LCs assemble on the IC dimer. Interacts with DYNC1H1; DYNC1LI1 and DYNC1LI2 bind mutually exclusive to DYNC1H.

The protein localises to the cytoplasm. It localises to the cytoskeleton. In terms of biological role, acts as one of several non-catalytic accessory components of the cytoplasmic dynein 1 complex that are thought to be involved in linking dynein to cargos and to adapter proteins that regulate dynein function. Cytoplasmic dynein 1 acts as a motor for the intracellular retrograde motility of vesicles and organelles along microtubules. May play a role in binding dynein to membranous organelles or chromosomes. This Homo sapiens (Human) protein is Cytoplasmic dynein 1 light intermediate chain 2.